Consider the following 151-residue polypeptide: Flagellar assembly factor FliW 2 (151 aa).

It belongs to the FliW family. Interacts with translational regulator CsrA and flagellin(s).

The protein resides in the cytoplasm. Its function is as follows. Acts as an anti-CsrA protein, binds CsrA and prevents it from repressing translation of its target genes, one of which is flagellin. Binds to flagellin and participates in the assembly of the flagellum. This is Flagellar assembly factor FliW 2 from Desulfotalea psychrophila (strain LSv54 / DSM 12343).